An 88-amino-acid chain; its full sequence is Beta-insect excitatory toxin 1 (88 aa).

A signal peptide spans Met1–Gly18. The LCN-type CS-alpha/beta domain occupies Lys20–Asp83. 4 cysteine pairs are disulfide-bonded: Cys34–Cys55, Cys40–Cys60, Cys44–Cys62, and Cys56–Cys82.

It belongs to the long (4 C-C) scorpion toxin superfamily. Sodium channel inhibitor family. Beta subfamily. As to expression, expressed by the venom gland.

The protein localises to the secreted. Its function is as follows. Excitatory insect beta-toxins induce a spastic paralysis. They bind voltage-independently at site-4 of sodium channels (Nav) and shift the voltage of activation toward more negative potentials thereby affecting sodium channel activation and promoting spontaneous and repetitive firing. This toxin is active only on insects. The chain is Beta-insect excitatory toxin 1 from Androctonus australis (Sahara scorpion).